Consider the following 1360-residue polypeptide: DNA-directed RNA polymerase subunit beta (1360 aa).

Belongs to the RNA polymerase beta chain family. As to quaternary structure, the RNAP catalytic core consists of 2 alpha, 1 beta, 1 beta' and 1 omega subunit. When a sigma factor is associated with the core the holoenzyme is formed, which can initiate transcription.

It carries out the reaction RNA(n) + a ribonucleoside 5'-triphosphate = RNA(n+1) + diphosphate. Its function is as follows. DNA-dependent RNA polymerase catalyzes the transcription of DNA into RNA using the four ribonucleoside triphosphates as substrates. The polypeptide is DNA-directed RNA polymerase subunit beta (Magnetococcus marinus (strain ATCC BAA-1437 / JCM 17883 / MC-1)).